Here is a 325-residue protein sequence, read N- to C-terminus: Anthranilate phosphoribosyltransferase (325 aa).

5-phospho-alpha-D-ribose 1-diphosphate-binding positions include G74, 77–78 (GD), T82, 84–87 (NVST), 101–109 (KHGNVSITS), and S113. Residue G74 coordinates anthranilate. A Mg(2+)-binding site is contributed by S86. N104 serves as a coordination point for anthranilate. R159 provides a ligand contact to anthranilate. Residues D217 and E218 each contribute to the Mg(2+) site.

Belongs to the anthranilate phosphoribosyltransferase family. As to quaternary structure, homodimer. Mg(2+) is required as a cofactor.

It catalyses the reaction N-(5-phospho-beta-D-ribosyl)anthranilate + diphosphate = 5-phospho-alpha-D-ribose 1-diphosphate + anthranilate. It participates in amino-acid biosynthesis; L-tryptophan biosynthesis; L-tryptophan from chorismate: step 2/5. In terms of biological role, catalyzes the transfer of the phosphoribosyl group of 5-phosphorylribose-1-pyrophosphate (PRPP) to anthranilate to yield N-(5'-phosphoribosyl)-anthranilate (PRA). The polypeptide is Anthranilate phosphoribosyltransferase (Thermococcus kodakarensis (strain ATCC BAA-918 / JCM 12380 / KOD1) (Pyrococcus kodakaraensis (strain KOD1))).